We begin with the raw amino-acid sequence, 276 residues long: Ribosomal RNA small subunit methyltransferase A (276 aa).

S-adenosyl-L-methionine is bound by residues N27, L29, G54, E75, D101, and N122.

This sequence belongs to the class I-like SAM-binding methyltransferase superfamily. rRNA adenine N(6)-methyltransferase family. RsmA subfamily.

The protein localises to the cytoplasm. It carries out the reaction adenosine(1518)/adenosine(1519) in 16S rRNA + 4 S-adenosyl-L-methionine = N(6)-dimethyladenosine(1518)/N(6)-dimethyladenosine(1519) in 16S rRNA + 4 S-adenosyl-L-homocysteine + 4 H(+). Its function is as follows. Specifically dimethylates two adjacent adenosines (A1518 and A1519) in the loop of a conserved hairpin near the 3'-end of 16S rRNA in the 30S particle. May play a critical role in biogenesis of 30S subunits. The chain is Ribosomal RNA small subunit methyltransferase A from Brucella abortus biovar 1 (strain 9-941).